Consider the following 625-residue polypeptide: ATP-binding cassette sub-family F member 2 (625 aa).

The disordered stretch occupies residues 1–54 (MPSDLAKKKAAKKKEAAKARQRPRKGHEENGDAITEPQVAEERNEEANGRETTE). Residues 40-54 (AEERNEEANGRETTE) are compositionally biased toward basic and acidic residues. ABC transporter domains are found at residues 88–327 (AHII…ENQM) and 398–615 (IMVQ…VGEE). 120 to 127 (GLNGIGKS) contacts ATP. Residue T220 is modified to Phosphothreonine. Position 306 is an N6-acetyllysine (K306). 432-439 (GPNGAGKS) serves as a coordination point for ATP. S514 carries the phosphoserine modification.

Belongs to the ABC transporter superfamily. ABCF family. EF3 subfamily.

This chain is ATP-binding cassette sub-family F member 2 (ABCF2), found in Bos taurus (Bovine).